The primary structure comprises 242 residues: Uridylate kinase (242 aa).

ATP is bound at residue 16–19; sequence KVSG. Gly58 lines the UMP pocket. ATP contacts are provided by Gly59 and Arg63. Residues Asp78 and 139 to 146 contribute to the UMP site; that span reads TGNPFCTT. Residues Thr166, Gln167, Tyr172, and Asp175 each contribute to the ATP site.

It belongs to the UMP kinase family. As to quaternary structure, homohexamer.

The protein localises to the cytoplasm. It catalyses the reaction UMP + ATP = UDP + ADP. Its pathway is pyrimidine metabolism; CTP biosynthesis via de novo pathway; UDP from UMP (UMPK route): step 1/1. Inhibited by UTP. In terms of biological role, catalyzes the reversible phosphorylation of UMP to UDP. The sequence is that of Uridylate kinase from Rickettsia massiliae (strain Mtu5).